The primary structure comprises 310 residues: D-apiose import binding protein (310 aa).

The signal sequence occupies residues 1–21; that stretch reads MKLLKASLVALSLAASTFVYA. D-apiofuranose-binding positions include asparagine 35, 111–112, 158–160, arginine 164, asparagine 214, aspartate 239, and glutamine 260; these read DR and DTN.

This sequence belongs to the bacterial solute-binding protein 2 family.

It localises to the periplasm. In terms of biological role, part of an ABC transporter complex involved in D-apiose import. Binds D-apiose, D-ribose and D-ribulose. In Actinobacillus succinogenes (strain ATCC 55618 / DSM 22257 / CCUG 43843 / 130Z), this protein is D-apiose import binding protein.